Reading from the N-terminus, the 230-residue chain is MQKVSRRHKENFERTKNIVYSNIDEAIAVLKETATTKFVESVELHANLNIDPKYADQQLRTTVTLPNGIGKQVVIAVLTNEENFEEAKSSGGDIVGNDELIAQITQGQINFDLLIATPNMMPKLAKLGRMLGPKGLMPSPKSGTVTSTLQSTLTEFKKGKFEYKADKTGIVHVNFGKSNFTNEQLVENLKALYQSIEQNRPSGVKGKYFKSVSICTTMGPSVKLDLEIFA.

This sequence belongs to the universal ribosomal protein uL1 family. Part of the 50S ribosomal subunit.

The protein localises to the plastid. The protein resides in the chloroplast. Binds directly to 23S rRNA. Might be involved in E site tRNA release (Potential). The polypeptide is Large ribosomal subunit protein uL1c (rpl1) (Phaeodactylum tricornutum (strain CCAP 1055/1)).